The sequence spans 116 residues: Ferredoxin-thioredoxin reductase, catalytic chain (116 aa).

Cys57 contributes to the [4Fe-4S] cluster binding site. Catalysis depends on Cys59, which acts as the Nucleophile. Cys59 and Cys89 are disulfide-bonded. [4Fe-4S] cluster contacts are provided by Cys76, Cys78, and Cys87.

The protein belongs to the ferredoxin thioredoxin reductase beta subunit family. In terms of assembly, heterodimer of subunit A (variable subunit) and subunit B (catalytic subunit). Heterodimeric FTR forms a complex with ferredoxin and thioredoxin. Requires [4Fe-4S] cluster as cofactor.

The protein localises to the plastid. The protein resides in the chloroplast. It carries out the reaction [thioredoxin]-disulfide + 2 reduced [2Fe-2S]-[ferredoxin] + 2 H(+) = [thioredoxin]-dithiol + 2 oxidized [2Fe-2S]-[ferredoxin]. Functionally, catalytic subunit of the ferredoxin-thioredoxin reductase (FTR), which catalyzes the two-electron reduction of thioredoxins by the electrons provided by reduced ferredoxin. The protein is Ferredoxin-thioredoxin reductase, catalytic chain (ftrB) of Pyropia yezoensis (Susabi-nori).